The sequence spans 669 residues: MEKIVPPAVRIEELRRILREHEYRYYVLSSPTIDDFEYDAMMKQLEELEREYPEWDSPDSPTHRVGSDKTEGFASVRHDRPMLSLSNTYNYDEIGDFYRRVSEGLQGAPFEIVAELKFDGLSISLIYEDGMLVRAVTRGDGIMGDDVTANVRTIRSVPLRLRGDDYPRMLEVRGEILLPFKEFDRINAQREAEGEPLFANPRNAASGTIKQLDPHIVAGRNLDAYFYYLYSDEPLAENHYDRLMQARQWGFKVSDAVTLCCSKEDVYAFIDRFDTERLTLPVATDGIVLKVNAPAQQDLLGFTAKSPRWAIAYKYQAERVRTRLQHVSYQVGRTGAVTPVANLDPVLISGTVVRRASLHNADFIAEKDLHEGDFVYVEKGGEIIPKIVGVDTDARSIDGRPIVFTVLCPDCATPLVREQGEAAYYCPNAEGCPQQQKGRLEHYCGRKAADINIGPETIELLYSRNMIRNVADFYALTEEQLLTLPGFKKRAAAKLLDSIEASKARPYQAILFGLGIRFVGETVAKKLAAVYPSIDALAAATSEELVQIDEIGERIAAAVLHFFSLRQNRELIERLRLAGVSLEAETVSVPVSARLAGKTVVISGTFEKYSRDEYKAMVEDNGGRMAGSVSSKTSFILAGSDMGPSKREKAEKLGVRLMSEEEFLRLIEE.

35 to 39 (DFEYD) is a binding site for NAD(+). The interval 52–71 (YPEWDSPDSPTHRVGSDKTE) is disordered. Residues 61 to 71 (PTHRVGSDKTE) show a composition bias toward basic and acidic residues. Residues 84–85 (SL) and Glu-115 contribute to the NAD(+) site. The active-site N6-AMP-lysine intermediate is Lys-117. NAD(+) is bound by residues Arg-138, Glu-175, Lys-290, and Lys-314. 4 residues coordinate Zn(2+): Cys-408, Cys-411, Cys-426, and Cys-432. In terms of domain architecture, BRCT spans 590–669 (PVSARLAGKT…EEEFLRLIEE (80 aa)).

The protein belongs to the NAD-dependent DNA ligase family. LigA subfamily. The cofactor is Mg(2+). It depends on Mn(2+) as a cofactor.

It carries out the reaction NAD(+) + (deoxyribonucleotide)n-3'-hydroxyl + 5'-phospho-(deoxyribonucleotide)m = (deoxyribonucleotide)n+m + AMP + beta-nicotinamide D-nucleotide.. Its function is as follows. DNA ligase that catalyzes the formation of phosphodiester linkages between 5'-phosphoryl and 3'-hydroxyl groups in double-stranded DNA using NAD as a coenzyme and as the energy source for the reaction. It is essential for DNA replication and repair of damaged DNA. The chain is DNA ligase from Porphyromonas gingivalis (strain ATCC 33277 / DSM 20709 / CIP 103683 / JCM 12257 / NCTC 11834 / 2561).